The primary structure comprises 207 residues: Ribosomal RNA small subunit methyltransferase G (207 aa).

Residues Gly73, Leu78, Val124–Glu125, and Arg139 contribute to the S-adenosyl-L-methionine site.

Belongs to the methyltransferase superfamily. RNA methyltransferase RsmG family.

The protein localises to the cytoplasm. It carries out the reaction guanosine(527) in 16S rRNA + S-adenosyl-L-methionine = N(7)-methylguanosine(527) in 16S rRNA + S-adenosyl-L-homocysteine. Functionally, specifically methylates the N7 position of guanine in position 527 of 16S rRNA. This is Ribosomal RNA small subunit methyltransferase G from Salmonella schwarzengrund (strain CVM19633).